Here is a 311-residue protein sequence, read N- to C-terminus: Malate dehydrogenase (311 aa).

NAD(+) is bound by residues Gly7 to Gly13 and Asp34. Positions 81 and 87 each coordinate substrate. NAD(+) is bound by residues Asn94 and Ile117 to Asn119. The substrate site is built by Asn119 and Arg153. The Proton acceptor role is filled by His177. Met227 is a binding site for NAD(+).

The protein belongs to the LDH/MDH superfamily. MDH type 1 family. Homodimer.

The catalysed reaction is (S)-malate + NAD(+) = oxaloacetate + NADH + H(+). Its function is as follows. Catalyzes the reversible oxidation of malate to oxaloacetate. This Aeromonas hydrophila subsp. hydrophila (strain ATCC 7966 / DSM 30187 / BCRC 13018 / CCUG 14551 / JCM 1027 / KCTC 2358 / NCIMB 9240 / NCTC 8049) protein is Malate dehydrogenase.